The following is a 768-amino-acid chain: 5-methyltetrahydropteroyltriglutamate--homocysteine methyltransferase (768 aa).

Residues 17-20 (REWK) and K113 contribute to the 5-methyltetrahydropteroyltri-L-glutamate site. Residues 440–442 (IGS) and E493 contribute to the L-homocysteine site. L-methionine contacts are provided by residues 440 to 442 (IGS) and E493. W570 serves as a coordination point for 5-methyltetrahydropteroyltri-L-glutamate. D608 is a binding site for L-homocysteine. D608 is an L-methionine binding site. E614 contacts 5-methyltetrahydropteroyltri-L-glutamate. Residues H650, C652, and E674 each contribute to the Zn(2+) site. H703 acts as the Proton donor in catalysis. C735 contacts Zn(2+).

The protein belongs to the vitamin-B12 independent methionine synthase family. Requires Zn(2+) as cofactor.

The catalysed reaction is 5-methyltetrahydropteroyltri-L-glutamate + L-homocysteine = tetrahydropteroyltri-L-glutamate + L-methionine. It participates in amino-acid biosynthesis; L-methionine biosynthesis via de novo pathway; L-methionine from L-homocysteine (MetE route): step 1/1. Functionally, catalyzes the transfer of a methyl group from 5-methyltetrahydrofolate to homocysteine resulting in methionine formation. In Lactiplantibacillus plantarum (strain ATCC BAA-793 / NCIMB 8826 / WCFS1) (Lactobacillus plantarum), this protein is 5-methyltetrahydropteroyltriglutamate--homocysteine methyltransferase.